The following is a 919-amino-acid chain: Valine--tRNA ligase (919 aa).

The short motif at 66–76 (PNVTGQLHMGH) is the 'HIGH' region element. The 'KMSKS' region motif lies at 562-566 (KMSKS). Residue Lys-565 participates in ATP binding. The stretch at 852–919 (TVDKEAERKR…RISARLEELK (68 aa)) forms a coiled coil.

The protein belongs to the class-I aminoacyl-tRNA synthetase family. ValS type 1 subfamily. As to quaternary structure, monomer.

The protein localises to the cytoplasm. It catalyses the reaction tRNA(Val) + L-valine + ATP = L-valyl-tRNA(Val) + AMP + diphosphate. Its function is as follows. Catalyzes the attachment of valine to tRNA(Val). As ValRS can inadvertently accommodate and process structurally similar amino acids such as threonine, to avoid such errors, it has a 'posttransfer' editing activity that hydrolyzes mischarged Thr-tRNA(Val) in a tRNA-dependent manner. The sequence is that of Valine--tRNA ligase from Corynebacterium diphtheriae (strain ATCC 700971 / NCTC 13129 / Biotype gravis).